Consider the following 241-residue polypeptide: uncharacterized protein (241 aa).

One can recognise a Cupin type-2 domain in the interval 22 to 78 (SHKHAYSQFLFPLEGSIDLETEGRQVKLNPDHFLYIPPQCEHRFRSIGRNECLVLDV). Residues 137–235 (YASIAYIHSH…GMPPRLYRNT (99 aa)) form the HTH araC/xylS-type domain. 2 consecutive DNA-binding regions (H-T-H motif) follow at residues 154-175 (KKLA…KKQT) and 202-225 (LTVV…TKST).

This is an uncharacterized protein from Bacillus subtilis (strain 168).